A 308-amino-acid polypeptide reads, in one-letter code: Putative acetyl-hydrolase LipR (308 aa).

Positions 1 to 40 (MNLRKNVIRSVLRGARPLFASRRLGIAGRRVLLATLTAGA) are cleaved as a signal peptide. Residues 76 to 78 (HGG) carry the Involved in the stabilization of the negatively charged intermediate by the formation of the oxyanion hole motif. Active-site residues include S146, D239, and H269.

The protein belongs to the 'GDXG' lipolytic enzyme family.

Its function is as follows. Required for maintaining the appropriate mycolic acid composition and permeability of the envelope on its exposure to acidic pH. This is Putative acetyl-hydrolase LipR (lipR) from Mycobacterium tuberculosis (strain ATCC 25618 / H37Rv).